Here is a 541-residue protein sequence, read N- to C-terminus: Sialate O-acetylesterase (541 aa).

The first 23 residues, 1–23, serve as a signal peptide directing secretion; it reads MVSPGPVFGIVLLIIARVSRSAG. Residues asparagine 107, asparagine 138, asparagine 188, asparagine 293, asparagine 356, asparagine 427, asparagine 448, and asparagine 462 are each glycosylated (N-linked (GlcNAc...) asparagine).

In terms of assembly, disulfide-linked heterodimer of a small subunit and a large subunit. Post-translationally, the two subunits are derived from a single precursor by proteolytic cleavage. In terms of processing, the lysosomal isoform is glycosylated. As to expression, highly expressed in liver, testis, and kidney, whereas skeletal muscle, adipose tissue, and heart have lower levels. Highest expression in brain and ovary and lower levels in liver and thymus.

It localises to the lysosome. Its subcellular location is the cytoplasm. It catalyses the reaction N-acetyl-9-O-acetylneuraminate + H2O = N-acetylneuraminate + acetate + H(+). It carries out the reaction an Ac-O-9-sialoglycoconjugate + H2O = a sialoglycoconjugate + acetate + H(+). With respect to regulation, inhibited by diisopropyl fluorophosphate and diethyl-P-nitrophenyl phosphate. Catalyzes the removal of O-acetyl ester groups from position 9 of the free diacetylated sialate N-acetyl-9-O-acetylneuraminate (Neu5,9Ac2) in the cytosol and of the diacetylated sialate residues of sialylglycoconjugates in the lysosomes. Together with the sialate-O-acetyltransferase they regulate the balance of acetylated sialoglycoconjugates, key players in various processes such as cell-cell interactions, host-pathogen recognition, and tumor antigenicity. In Mus musculus (Mouse), this protein is Sialate O-acetylesterase (Siae).